The sequence spans 570 residues: Pre-mRNA 3'-end-processing factor FIP1 (570 aa).

Over residues 1–10 (MSAEEADKTT) the composition is skewed to basic and acidic residues. The interval 1 to 107 (MSAEEADKTT…SDDDDDDVRV (107 aa)) is disordered. Over residues 16–38 (AGDEEEEWLYGDEGESKETEEEE) the composition is skewed to acidic residues. Residues 56-77 (DAPTTTNNSSDSATPPTTTTTT) are compositionally biased toward low complexity. A compositionally biased stretch (acidic residues) spans 87-104 (APGEDEDSESDSDDDDDD). Threonine 125 carries the post-translational modification Phosphothreonine. Serine 247 bears the Phosphoserine mark. Disordered stretches follow at residues 300–328 (RRRH…VQKM), 371–400 (PNFP…YDGR), and 418–570 (GAVN…EAME). Residues 371–384 (PNFPPPTGGPPPSL) show a composition bias toward pro residues. 2 stretches are compositionally biased toward basic and acidic residues: residues 436 to 462 (YPRR…RDHS) and 476 to 506 (DEER…EERH). 2 stretches are compositionally biased toward basic residues: residues 520-529 (KSSRSSSRRR) and 538-548 (HRRHKHKKSKR). Residues 549–562 (SKEGKEPSEERSAD) show a composition bias toward basic and acidic residues.

Belongs to the FIP1 family.

It localises to the nucleus. Involved in mRNA processing. This is Pre-mRNA 3'-end-processing factor FIP1 (fip1l1) from Danio rerio (Zebrafish).